A 230-amino-acid polypeptide reads, in one-letter code: 2-C-methyl-D-erythritol 4-phosphate cytidylyltransferase (230 aa).

This sequence belongs to the IspD/TarI cytidylyltransferase family. IspD subfamily.

The enzyme catalyses 2-C-methyl-D-erythritol 4-phosphate + CTP + H(+) = 4-CDP-2-C-methyl-D-erythritol + diphosphate. The protein operates within isoprenoid biosynthesis; isopentenyl diphosphate biosynthesis via DXP pathway; isopentenyl diphosphate from 1-deoxy-D-xylulose 5-phosphate: step 2/6. Its function is as follows. Catalyzes the formation of 4-diphosphocytidyl-2-C-methyl-D-erythritol from CTP and 2-C-methyl-D-erythritol 4-phosphate (MEP). This is 2-C-methyl-D-erythritol 4-phosphate cytidylyltransferase from Laribacter hongkongensis (strain HLHK9).